The primary structure comprises 337 residues: Ketol-acid reductoisomerase (NADP(+)) (337 aa).

A KARI N-terminal Rossmann domain is found at 1–183 (MAIETLYDSD…GGARAGVIPT (183 aa)). NADP(+) is bound by residues 26 to 29 (YGSQ), R49, S52, S54, and 84 to 87 (DTSQ). Residue H109 is part of the active site. NADP(+) is bound at residue G135. The KARI C-terminal knotted domain occupies 184–329 (TFKDETETDL…SQLRDLMSWV (146 aa)). Mg(2+) contacts are provided by D192, E196, E228, and E232. S253 serves as a coordination point for substrate.

It belongs to the ketol-acid reductoisomerase family. Mg(2+) serves as cofactor.

The enzyme catalyses (2R)-2,3-dihydroxy-3-methylbutanoate + NADP(+) = (2S)-2-acetolactate + NADPH + H(+). The catalysed reaction is (2R,3R)-2,3-dihydroxy-3-methylpentanoate + NADP(+) = (S)-2-ethyl-2-hydroxy-3-oxobutanoate + NADPH + H(+). The protein operates within amino-acid biosynthesis; L-isoleucine biosynthesis; L-isoleucine from 2-oxobutanoate: step 2/4. It participates in amino-acid biosynthesis; L-valine biosynthesis; L-valine from pyruvate: step 2/4. Its function is as follows. Involved in the biosynthesis of branched-chain amino acids (BCAA). Catalyzes an alkyl-migration followed by a ketol-acid reduction of (S)-2-acetolactate (S2AL) to yield (R)-2,3-dihydroxy-isovalerate. In the isomerase reaction, S2AL is rearranged via a Mg-dependent methyl migration to produce 3-hydroxy-3-methyl-2-ketobutyrate (HMKB). In the reductase reaction, this 2-ketoacid undergoes a metal-dependent reduction by NADPH to yield (R)-2,3-dihydroxy-isovalerate. The polypeptide is Ketol-acid reductoisomerase (NADP(+)) (Corynebacterium aurimucosum (strain ATCC 700975 / DSM 44827 / CIP 107346 / CN-1) (Corynebacterium nigricans)).